The following is an 89-amino-acid chain: Teretoxin Tan6.8 (89 aa).

The N-terminal stretch at 1–21 is a signal peptide; it reads MRLLLILLLLTPVILAGSLDE. Positions 22–42 are disordered; it reads EPNNADGANAASFTADQEGRH. The propeptide occupies 22–44; that stretch reads EPNNADGANAASFTADQEGRHKR.

In terms of processing, contains 3 disulfide bonds. As to expression, expressed by the venom duct.

It localises to the secreted. The polypeptide is Teretoxin Tan6.8 (Terebra anilis (Auger snail)).